Consider the following 492-residue polypeptide: ATP synthase subunit beta, chloroplastic (492 aa).

An ATP-binding site is contributed by 170–177 (GGAGVGKT).

Belongs to the ATPase alpha/beta chains family. In terms of assembly, F-type ATPases have 2 components, CF(1) - the catalytic core - and CF(0) - the membrane proton channel. CF(1) has five subunits: alpha(3), beta(3), gamma(1), delta(1), epsilon(1). CF(0) has four main subunits: a(1), b(1), b'(1) and c(9-12).

The protein localises to the plastid. It localises to the chloroplast thylakoid membrane. It carries out the reaction ATP + H2O + 4 H(+)(in) = ADP + phosphate + 5 H(+)(out). In terms of biological role, produces ATP from ADP in the presence of a proton gradient across the membrane. The catalytic sites are hosted primarily by the beta subunits. The protein is ATP synthase subunit beta, chloroplastic of Psilotum nudum (Whisk fern).